Here is a 304-residue protein sequence, read N- to C-terminus: Ornithine carbamoyltransferase (304 aa).

Carbamoyl phosphate contacts are provided by residues 53-56, Gln80, Arg104, and 131-134; these read STRT and HPCQ. L-ornithine-binding positions include Asn162, Asp222, and 226–227; that span reads SM. Carbamoyl phosphate contacts are provided by residues 261–262 and Arg289; that span reads CL.

It belongs to the aspartate/ornithine carbamoyltransferase superfamily. OTCase family.

The protein localises to the cytoplasm. The catalysed reaction is carbamoyl phosphate + L-ornithine = L-citrulline + phosphate + H(+). It participates in amino-acid biosynthesis; L-arginine biosynthesis; L-arginine from L-ornithine and carbamoyl phosphate: step 1/3. In terms of biological role, reversibly catalyzes the transfer of the carbamoyl group from carbamoyl phosphate (CP) to the N(epsilon) atom of ornithine (ORN) to produce L-citrulline. This is Ornithine carbamoyltransferase from Rhizobium johnstonii (strain DSM 114642 / LMG 32736 / 3841) (Rhizobium leguminosarum bv. viciae).